The chain runs to 73 residues: Tetrahydromethanopterin S-methyltransferase subunit F (73 aa).

A helical transmembrane segment spans residues 52–72 (IGFAAGFLFSLLMVIVLPLLF).

It belongs to the MtrF family. The complex is composed of 8 subunits; MtrA, MtrB, MtrC, MtrD, MtrE, MtrF, MtrG and MtrH.

The protein resides in the cell membrane. The catalysed reaction is 5-methyl-5,6,7,8-tetrahydromethanopterin + coenzyme M + 2 Na(+)(in) = 5,6,7,8-tetrahydromethanopterin + methyl-coenzyme M + 2 Na(+)(out). Its pathway is one-carbon metabolism; methanogenesis from CO(2); methyl-coenzyme M from 5,10-methylene-5,6,7,8-tetrahydromethanopterin: step 2/2. Part of a complex that catalyzes the formation of methyl-coenzyme M and tetrahydromethanopterin from coenzyme M and methyl-tetrahydromethanopterin. This is an energy-conserving, sodium-ion translocating step. The polypeptide is Tetrahydromethanopterin S-methyltransferase subunit F (Methanosarcina barkeri (strain Fusaro / DSM 804)).